Consider the following 87-residue polypeptide: Small ribosomal subunit protein bS18 (87 aa).

This sequence belongs to the bacterial ribosomal protein bS18 family. As to quaternary structure, part of the 30S ribosomal subunit. Forms a tight heterodimer with protein bS6.

Functionally, binds as a heterodimer with protein bS6 to the central domain of the 16S rRNA, where it helps stabilize the platform of the 30S subunit. The chain is Small ribosomal subunit protein bS18 from Sulfurimonas denitrificans (strain ATCC 33889 / DSM 1251) (Thiomicrospira denitrificans (strain ATCC 33889 / DSM 1251)).